The chain runs to 146 residues: MSSVKRLDINYKTDELFEDFRNFGNKDLYLVDELRGEMIDASSDSPFYGIYVGDCLGARMALYRKGEVEETHFPGFDDYNVIWKLEVLRDFQGRGYGTSLLDFAKDQGLPIKVIARNQSKDFFIKQGFTDLEETNRDGHDVLVWTP.

The N-acetyltransferase domain maps to 7 to 146 (LDINYKTDEL…DGHDVLVWTP (140 aa)).

This is an uncharacterized protein from Staphylococcus saprophyticus subsp. saprophyticus (strain ATCC 15305 / DSM 20229 / NCIMB 8711 / NCTC 7292 / S-41).